Here is a 242-residue protein sequence, read N- to C-terminus: MYFYLKYNINNMIMRRVRSFVSRNRKLTQNKRQFLKNYLLKYGIDFSCSYVNFNFIFNNEYPVILEIGFGTGEFLINMARKNLFSNFLGIEVYIPSILSCLRYIHKYNLPNVKVIFYDAVEVISYMISNNSLSEVYILFPDPWPKRRHHKRRIITKELLEVILKKLVFGGYLNIATDCQIYAKSILNIIENIKGYINLSNTGDYVIRSDYRLVTKFEKKGLVLGNKIFNLKFKSIFNNSNFL.

Glutamate 66, glutamate 91, aspartate 118, and aspartate 141 together coordinate S-adenosyl-L-methionine. The active site involves aspartate 141. Substrate-binding positions include lysine 145, aspartate 177, and 214–217 (TKFE).

It belongs to the class I-like SAM-binding methyltransferase superfamily. TrmB family. In terms of assembly, monomer.

The catalysed reaction is guanosine(46) in tRNA + S-adenosyl-L-methionine = N(7)-methylguanosine(46) in tRNA + S-adenosyl-L-homocysteine. It participates in tRNA modification; N(7)-methylguanine-tRNA biosynthesis. In terms of biological role, catalyzes the formation of N(7)-methylguanine at position 46 (m7G46) in tRNA. The sequence is that of tRNA (guanine-N(7)-)-methyltransferase from Buchnera aphidicola subsp. Baizongia pistaciae (strain Bp).